Consider the following 380-residue polypeptide: Putative ankyrin repeat protein RF_1306 (380 aa).

ANK repeat units follow at residues 48–76 (NKWS…NINA), 80–109 (KCRT…KIAP), 112–143 (YGWS…KYDK), 170–199 (NNKT…KFDI), 203–233 (LGYK…GKNT), 239–268 (LEKV…GFDK), 270–299 (LGQK…DAQY), 303–333 (LGRS…DINY), and 337–366 (SGLN…YESY).

The chain is Putative ankyrin repeat protein RF_1306 from Rickettsia felis (strain ATCC VR-1525 / URRWXCal2) (Rickettsia azadi).